The sequence spans 397 residues: Phosphoglycerate kinase (397 aa).

Substrate contacts are provided by residues 21-23 (DFN), arginine 37, 60-63 (HLGR), arginine 120, and arginine 153. Residues lysine 206, glycine 296, glutamate 327, and 353–356 (GGDS) contribute to the ATP site.

Belongs to the phosphoglycerate kinase family. In terms of assembly, monomer.

The protein resides in the cytoplasm. The enzyme catalyses (2R)-3-phosphoglycerate + ATP = (2R)-3-phospho-glyceroyl phosphate + ADP. The protein operates within carbohydrate degradation; glycolysis; pyruvate from D-glyceraldehyde 3-phosphate: step 2/5. This chain is Phosphoglycerate kinase, found in Rhodopirellula baltica (strain DSM 10527 / NCIMB 13988 / SH1).